The following is a 287-amino-acid chain: uncharacterized protein (287 aa).

A compositionally biased stretch (basic and acidic residues) spans 1–17; it reads MRWQGRRESDNVEDRRN. Residues 1 to 29 form a disordered region; the sequence is MRWQGRRESDNVEDRRNSSGGPSMGGPGF. A helical transmembrane segment spans residues 38–60; that stretch reads LILLIVVLVAGYYGVDLTGLMTG.

It is found in the membrane. This is an uncharacterized protein from Escherichia coli O6:H1 (strain CFT073 / ATCC 700928 / UPEC).